We begin with the raw amino-acid sequence, 427 residues long: Queuine tRNA-ribosyltransferase catalytic subunit (427 aa).

Residue Asp99 is the Proton acceptor of the active site. Substrate contacts are provided by residues 99–103 (DSGGF), Asp153, Gln196, and Gly223. Residues 254–260 (GVGFAAD) form an RNA binding region. The active-site Nucleophile is the Asp273. Positions 278–282 (TRTAR) are RNA binding; important for wobble base 34 recognition. 4 residues coordinate Zn(2+): Cys311, Cys313, Cys316, and His341. Residues 395-427 (PADPERIDEQDQKPKTEKRRETEDVAEEQVASS) form a disordered region. Over residues 397 to 417 (DPERIDEQDQKPKTEKRRETE) the composition is skewed to basic and acidic residues.

Belongs to the queuine tRNA-ribosyltransferase family. As to quaternary structure, heterodimer of a catalytic subunit and an accessory subunit. Requires Zn(2+) as cofactor.

It localises to the cytoplasm. It catalyses the reaction guanosine(34) in tRNA + queuine = queuosine(34) in tRNA + guanine. Catalytic subunit of the queuine tRNA-ribosyltransferase (TGT) that catalyzes the base-exchange of a guanine (G) residue with queuine (Q) at position 34 (anticodon wobble position) in tRNAs with GU(N) anticodons (tRNA-Asp, -Asn, -His and -Tyr), resulting in the hypermodified nucleoside queuosine (7-(((4,5-cis-dihydroxy-2-cyclopenten-1-yl)amino)methyl)-7-deazaguanosine). Catalysis occurs through a double-displacement mechanism. The nucleophile active site attacks the C1' of nucleotide 34 to detach the guanine base from the RNA, forming a covalent enzyme-RNA intermediate. The proton acceptor active site deprotonates the incoming queuine, allowing a nucleophilic attack on the C1' of the ribose to form the product. This Drosophila melanogaster (Fruit fly) protein is Queuine tRNA-ribosyltransferase catalytic subunit (Tgt).